The chain runs to 473 residues: Probable aspartokinase (473 aa).

ACT domains follow at residues 323-392 (IFGA…FLNN) and 409-473 (VVGA…KTNS).

Belongs to the aspartokinase family.

It catalyses the reaction L-aspartate + ATP = 4-phospho-L-aspartate + ADP. It participates in amino-acid biosynthesis; L-lysine biosynthesis via DAP pathway; (S)-tetrahydrodipicolinate from L-aspartate: step 1/4. The protein operates within amino-acid biosynthesis; L-methionine biosynthesis via de novo pathway; L-homoserine from L-aspartate: step 1/3. Its pathway is amino-acid biosynthesis; L-threonine biosynthesis; L-threonine from L-aspartate: step 1/5. This Methanocaldococcus jannaschii (strain ATCC 43067 / DSM 2661 / JAL-1 / JCM 10045 / NBRC 100440) (Methanococcus jannaschii) protein is Probable aspartokinase.